Consider the following 424-residue polypeptide: Deoxyguanosinetriphosphate triphosphohydrolase-like protein (424 aa).

Pro residues predominate over residues 1–10 (MEGTAPPTPY). Residues 1-31 (MEGTAPPTPYDPASVARYAPEPDKRPGRTAF) are disordered. Residues 20–31 (PEPDKRPGRTAF) are compositionally biased toward basic and acidic residues. Positions 70–220 (RLTHSLECAQ…MDWADDVAYS (151 aa)) constitute an HD domain.

This sequence belongs to the dGTPase family. Type 2 subfamily.

This Streptomyces coelicolor (strain ATCC BAA-471 / A3(2) / M145) protein is Deoxyguanosinetriphosphate triphosphohydrolase-like protein.